The sequence spans 546 residues: MADTKYIFVTGGVSSSLGKGIIAASLAKLLQARGFKATIQKLDPYINVDPGTLNPYEHGECYVTEDGAETDLDLGHYERFLNVNTSQANNVTTGRIYQSVIEKERRGEFLGKTVQVVPHITNEIKERIQILGKNGDYDIVITEIGGTVGDIESLPYIEAVRQLKWELGDDNALVIHLTLVPYLSAAGELKTKPTQHSVKTLMESGIKADILVCRTEHELSDDIRRKLAIFCNVRQEAVIQSIDARTIYDVPNMMLKEGLDKVTLKKLALPDDSTPNLDRWNQFLQRHKNPKAEVHIGLIGKYVELQDSYKSILESFIHAGAENEVSVNVEYIHSEFINDSTIHNKISHLDGVLVAPGFGERGIEGKIDAVRYARENDLPFLGICLGMQMAVIEFSRNVLQLKGANSTEMDADTKHPVIDLMEAQKEVTHKGGTMRLGAWDCELSKDSIIHAVYGVDKIKERHRHRYEYNNKYKEQLENAGMLSTGINPETGLVEIIELKDHPWFVGVQYHPEYKSTVASPHPLFVSFVKAAHEHSVKQKNAKMAQK.

Residues 1-269 form an amidoligase domain region; sequence MADTKYIFVT…DKVTLKKLAL (269 aa). Serine 15 lines the CTP pocket. Serine 15 contributes to the UTP binding site. An ATP-binding site is contributed by 16–21; that stretch reads SLGKGI. Residue tyrosine 56 participates in L-glutamine binding. Residue aspartate 73 participates in ATP binding. The Mg(2+) site is built by aspartate 73 and glutamate 143. CTP-binding positions include 150 to 152, 190 to 195, and lysine 226; these read DIE and KTKPTQ. UTP is bound by residues 190–195 and lysine 226; that span reads KTKPTQ. In terms of domain architecture, Glutamine amidotransferase type-1 spans 295–537; it reads HIGLIGKYVE…VKAAHEHSVK (243 aa). L-glutamine is bound at residue glycine 357. The Nucleophile; for glutamine hydrolysis role is filled by cysteine 384. L-glutamine-binding positions include 385 to 388, glutamate 408, and arginine 465; that span reads LGMQ. Residues histidine 510 and glutamate 512 contribute to the active site.

The protein belongs to the CTP synthase family. As to quaternary structure, homotetramer.

It catalyses the reaction UTP + L-glutamine + ATP + H2O = CTP + L-glutamate + ADP + phosphate + 2 H(+). It carries out the reaction L-glutamine + H2O = L-glutamate + NH4(+). The enzyme catalyses UTP + NH4(+) + ATP = CTP + ADP + phosphate + 2 H(+). It participates in pyrimidine metabolism; CTP biosynthesis via de novo pathway; CTP from UDP: step 2/2. Its activity is regulated as follows. Allosterically activated by GTP, when glutamine is the substrate; GTP has no effect on the reaction when ammonia is the substrate. The allosteric effector GTP functions by stabilizing the protein conformation that binds the tetrahedral intermediate(s) formed during glutamine hydrolysis. Inhibited by the product CTP, via allosteric rather than competitive inhibition. Its function is as follows. Catalyzes the ATP-dependent amination of UTP to CTP with either L-glutamine or ammonia as the source of nitrogen. Regulates intracellular CTP levels through interactions with the four ribonucleotide triphosphates. This is CTP synthase from Christiangramia forsetii (strain DSM 17595 / CGMCC 1.15422 / KT0803) (Gramella forsetii).